Here is a 329-residue protein sequence, read N- to C-terminus: Acrosin (329 aa).

Positions 1-17 (MLPTAVLLVLAVSVVAR) are cleaved as a signal peptide. An N-linked (GlcNAc...) asparagine glycan is attached at Asn19. Intrachain disulfides connect Cys22-Cys152, Cys26-Cys160, Cys71-Cys87, Cys175-Cys244, Cys207-Cys223, and Cys234-Cys264. The Peptidase S1 domain occupies 40-288 (IIGGQDAAHG…YLNWIASKIG (249 aa)). Residues His86 and Asp140 each act as charge relay system in the active site. N-linked (GlcNAc...) asparagine glycosylation is present at Asn208. Residue Ser238 is the Charge relay system of the active site.

This sequence belongs to the peptidase S1 family. Heavy chain (catalytic) and a light chain linked by two disulfide bonds. Forms a heterodimer with SERPINA5.

The enzyme catalyses Preferential cleavage: Arg-|-Xaa, Lys-|-Xaa.. Inhibited by SERPINA5. Functionally, acrosin is the major protease of mammalian spermatozoa. It is a serine protease of trypsin-like cleavage specificity, it is synthesized in a zymogen form, proacrosin and stored in the acrosome. In Ovis aries (Sheep), this protein is Acrosin (ACR).